The sequence spans 882 residues: MRRMFGDCQVLSSMAAMAGASSSADALFASPLIPNPALAGFMSSSAAMPFHHFSNAAATLIPKEEGLMGGLHVAKDEEMDLEMDMELSGGSGSAHLDGLLSFADVDDDHKPQHSGHDQPPDAAQPSGAAGGNAKKKRYHRHTAHQIQQMEALFKECPHPDDKQRLKLSQELGLKPRQVKFWFQNRRTQMKAQQDRADNVILRAENENLKSDNFRLQAAIRNVVCPNCGHAAVLADMSYEEQQLRIENARLKDELDRLACIATRYGGGGGRQPVLSTSALSCISAPPPVLMPPLDLDMNVYSRHFAEQAPVMGCGDLIPPPVVPQHDGAAAYMGAMMAPVQEQDKQLVVDLAATAADQLARMCRAGEPLWVRQRGAEVMAVEEHARMFSWPVDGAKQGDGGAVARAEGTRDNAVVIMNSINLVDAFLDANKWMELFPSIVCKARTIQIINHGAASGHLGSGTLLLMQAEVQFLSPLVAAREVVFFRYCVHNADEGSWAIVDFPAEGFEEGLLQASVVRCRRRPSGCIIQDMPNGYSRVVWVEHMEMVGEEKPLQPVFRDYVASGAAFGATRWLSILQRQCERLASELARNIADLGVIRTPEARTNMMKLSQRMITTFCANISASGTQSWTALSDSTQDTIRVTTRKNTEPGQPSGVILTAVSTSWLPFTHQQVFELLADEQQRCQLEILSNGGSLHEVAHIANGSHPRNCISLLRINAASNSSQNVELLLQESSTHPDGGSLVVFATVDVDAIQVTMSGEDPSYIPLLPLGFAIFPATSPSPAAAPTISSSTTTTTGNGNGETSSTPPRNSSSNNNNADELLPPNGCLLTVGMQVLASAVPSAKLNLSSVTAINSHVCNAIHQITAALKGSAGGAGGEPASDQ.

The disordered stretch occupies residues 104–144; it reads DVDDDHKPQHSGHDQPPDAAQPSGAAGGNAKKKRYHRHTAH. Positions 107 to 119 are enriched in basic and acidic residues; the sequence is DDHKPQHSGHDQP. Basic residues predominate over residues 133 to 143; it reads AKKKRYHRHTA. Positions 134-193 form a DNA-binding region, homeobox; sequence KKKRYHRHTAHQIQQMEALFKECPHPDDKQRLKLSQELGLKPRQVKFWFQNRRTQMKAQQ. Positions 200–263 form a coiled coil; it reads ILRAENENLK…LDRLACIATR (64 aa). An START domain is found at 340-584; sequence QEQDKQLVVD…LQRQCERLAS (245 aa). The segment covering 782-816 has biased composition (low complexity); it reads AAAPTISSSTTTTTGNGNGETSSTPPRNSSSNNNN. Residues 782–820 are disordered; it reads AAAPTISSSTTTTTGNGNGETSSTPPRNSSSNNNNADEL.

This sequence belongs to the HD-ZIP homeobox family. Class IV subfamily.

The protein resides in the nucleus. Functionally, probable transcription factor. The sequence is that of Homeobox-leucine zipper protein ROC3 (ROC3) from Oryza sativa subsp. indica (Rice).